Reading from the N-terminus, the 492-residue chain is Phytoene desaturase (lycopene-forming) (492 aa).

Position 5-38 (5-38) interacts with FAD; it reads TVIGAGFGGLALAIRLQAAGIPVLLLEQRDKPGG.

It belongs to the carotenoid/retinoid oxidoreductase family. FAD is required as a cofactor.

The protein localises to the cell membrane. It carries out the reaction 15-cis-phytoene + 4 A = all-trans-lycopene + 4 AH2. It participates in carotenoid biosynthesis; lycopene biosynthesis. With respect to regulation, inhibited by NAD and NADP. Functionally, converts 15-cis-phytoene into all-trans-lycopene via the intermediary of all-trans-phytofluene, all-trans-zeta-carotene and all-trans-neurosporene, by the introduction of four double bonds. The sequence is that of Phytoene desaturase (lycopene-forming) (crtI) from Pantoea ananas (Erwinia uredovora).